Here is a 275-residue protein sequence, read N- to C-terminus: MPELPEVETTRRGIEPALVGKRLCGVVVRQPQLRWPIPVKTLEKELVGQVIQQVARRAKYLLWRCPQGTLLVHLGMSGSLRIVPEHTPPAKHDHVDWVMEGGQMVRLHDPRRFGAVVWIPVTSPEEEHPLLAKLGPEPLHRSLNGRYLHQGSRGRQLAVKNYIMDQSVVVGVGNIYASEALFRAGIAPAQAAGKVGLGRYRALACAIKAVLGDSIEQGGTTLRDFIGSDGKPGYFVQSLNVYGRAGKACPKCGTTIEKQVLGQRSSYYCPQCQRA.

Pro2 functions as the Schiff-base intermediate with DNA in the catalytic mechanism. Glu3 functions as the Proton donor in the catalytic mechanism. Lys59 functions as the Proton donor; for beta-elimination activity in the catalytic mechanism. DNA contacts are provided by His92, Arg111, and Arg155. An FPG-type zinc finger spans residues 240-274 (NVYGRAGKACPKCGTTIEKQVLGQRSSYYCPQCQR). The active-site Proton donor; for delta-elimination activity is the Arg264.

Belongs to the FPG family. Monomer. Zn(2+) is required as a cofactor.

It carries out the reaction Hydrolysis of DNA containing ring-opened 7-methylguanine residues, releasing 2,6-diamino-4-hydroxy-5-(N-methyl)formamidopyrimidine.. The enzyme catalyses 2'-deoxyribonucleotide-(2'-deoxyribose 5'-phosphate)-2'-deoxyribonucleotide-DNA = a 3'-end 2'-deoxyribonucleotide-(2,3-dehydro-2,3-deoxyribose 5'-phosphate)-DNA + a 5'-end 5'-phospho-2'-deoxyribonucleoside-DNA + H(+). Functionally, involved in base excision repair of DNA damaged by oxidation or by mutagenic agents. Acts as a DNA glycosylase that recognizes and removes damaged bases. Has a preference for oxidized purines, such as 7,8-dihydro-8-oxoguanine (8-oxoG). Has AP (apurinic/apyrimidinic) lyase activity and introduces nicks in the DNA strand. Cleaves the DNA backbone by beta-delta elimination to generate a single-strand break at the site of the removed base with both 3'- and 5'-phosphates. This is Formamidopyrimidine-DNA glycosylase from Magnetococcus marinus (strain ATCC BAA-1437 / JCM 17883 / MC-1).